The following is a 906-amino-acid chain: Protein translocase subunit SecA (906 aa).

ATP is bound by residues Gln-86, 104-108 (GEGKT), and Asp-499. Positions 865 to 885 (VSRIDPKDRNPEDPTSWGRVS) are disordered. 4 residues coordinate Zn(2+): Cys-890, Cys-892, Cys-901, and His-902.

The protein belongs to the SecA family. As to quaternary structure, monomer and homodimer. Part of the essential Sec protein translocation apparatus which comprises SecA, SecYEG and auxiliary proteins SecDF-YajC and YidC. Zn(2+) serves as cofactor.

Its subcellular location is the cell inner membrane. The protein localises to the cytoplasm. It carries out the reaction ATP + H2O + cellular proteinSide 1 = ADP + phosphate + cellular proteinSide 2.. Its function is as follows. Part of the Sec protein translocase complex. Interacts with the SecYEG preprotein conducting channel. Has a central role in coupling the hydrolysis of ATP to the transfer of proteins into and across the cell membrane, serving both as a receptor for the preprotein-SecB complex and as an ATP-driven molecular motor driving the stepwise translocation of polypeptide chains across the membrane. This is Protein translocase subunit SecA from Rickettsia canadensis (strain McKiel).